Reading from the N-terminus, the 136-residue chain is Secreted RxLR effector protein 63 (136 aa).

The N-terminal stretch at 1–21 is a signal peptide; it reads MQRFPYSLLLLLLSATNRSRR. The short motif at 43–46 is the RxLR element; the sequence is RMLR.

The protein belongs to the RxLR effector family.

The protein localises to the secreted. It localises to the host nucleus. Its function is as follows. Effector that partially suppresses the tobacco programmed cell death induced by cell death-inducing proteins. This chain is Secreted RxLR effector protein 63, found in Plasmopara viticola (Downy mildew of grapevine).